The primary structure comprises 494 residues: UDP-glucose 6-dehydrogenase (494 aa).

Residues 11-16 (GAGYVG), aspartate 36, arginine 41, and 89-93 (VNTPT) contribute to the NAD(+) site. Residues 88–110 (SVNTPTKTYGMGKGRAADLKYIE) are disordered. An N6-acetyllysine modification is found at lysine 107. The segment at 129-135 (KSTVPVR) is allosteric switch region. 130–132 (STV) serves as a coordination point for NAD(+). Glutamate 161 (proton donor/acceptor) is an active-site residue. Residues 161-165 (EFLAE), 220-224 (KLTAN), arginine 260, and 267-273 (KASVGFG) each bind substrate. NAD(+) is bound at residue glutamate 165. Lysine 220 (proton donor/acceptor) is an active-site residue. The active-site Nucleophile is cysteine 276. 276–279 (CFQK) contributes to the NAD(+) binding site. Positions 321–325 (SLFNT) are important for formation of active hexamer structure. 338–339 (FK) provides a ligand contact to substrate. Arginine 346 lines the NAD(+) pocket. Position 442 (arginine 442) interacts with substrate. Residues 466–494 (VSSKRIPYAPSGEIPKFSLQDMPNKKPRV) are disordered. Serine 476 carries the phosphoserine modification.

It belongs to the UDP-glucose/GDP-mannose dehydrogenase family. As to quaternary structure, homohexamer.

It catalyses the reaction UDP-alpha-D-glucose + 2 NAD(+) + H2O = UDP-alpha-D-glucuronate + 2 NADH + 3 H(+). The protein operates within nucleotide-sugar biosynthesis; UDP-alpha-D-glucuronate biosynthesis; UDP-alpha-D-glucuronate from UDP-alpha-D-glucose: step 1/1. Its activity is regulated as follows. UDP-alpha-D-xylose (UDX) acts as a feedback inhibitor. It binds at the same site as the substrate, but functions as allosteric inhibitor by triggering a conformation change that disrupts the active hexameric ring structure and gives rise to an inactive, horseshoe-shaped hexamer. Catalyzes the formation of UDP-alpha-D-glucuronate, a constituent of complex glycosaminoglycans. Required for the biosynthesis of chondroitin sulfate and heparan sulfate. Required for embryonic development via its role in the biosynthesis of glycosaminoglycans. Required for proper brain and neuronal development. The polypeptide is UDP-glucose 6-dehydrogenase (UGDH) (Bos taurus (Bovine)).